A 507-amino-acid polypeptide reads, in one-letter code: ATP synthase subunit alpha, chloroplastic (507 aa).

Position 170-177 (170-177) interacts with ATP; sequence GDRQTGKT.

Belongs to the ATPase alpha/beta chains family. F-type ATPases have 2 components, CF(1) - the catalytic core - and CF(0) - the membrane proton channel. CF(1) has five subunits: alpha(3), beta(3), gamma(1), delta(1), epsilon(1). CF(0) has four main subunits: a, b, b' and c.

It localises to the plastid. The protein localises to the chloroplast thylakoid membrane. It catalyses the reaction ATP + H2O + 4 H(+)(in) = ADP + phosphate + 5 H(+)(out). In terms of biological role, produces ATP from ADP in the presence of a proton gradient across the membrane. The alpha chain is a regulatory subunit. This chain is ATP synthase subunit alpha, chloroplastic, found in Drimys granadensis.